The sequence spans 611 residues: Chaperonin 60 subunit beta 4, chloroplastic (611 aa).

A chloroplast-targeting transit peptide spans M1–R37. Residues Q377–A480 adopt a coiled-coil conformation. The interval I574–P595 is disordered.

This sequence belongs to the chaperonin (HSP60) family. Part of the Cpn60 complex composed of 7 alpha and 7 beta subunits. Can also form a complex composed of 14 beta subunits only. Both complexes show ATPase activity. The Cpn60 complex interacts with the Cpn10 complex. Interacts with NDHH.

The protein resides in the plastid. It is found in the chloroplast stroma. In terms of biological role, involved specifically in the folding of NDHH, a subunit of the chloroplast NADH dehydrogenase-like complex (NDH). This Arabidopsis thaliana (Mouse-ear cress) protein is Chaperonin 60 subunit beta 4, chloroplastic (CPN60B4).